Consider the following 92-residue polypeptide: Translation initiation factor IF-1 (92 aa).

The region spanning 1–72 (MAKEELIQFE…EKGRLIFRHK (72 aa)) is the S1-like domain. The segment at 69-92 (FRHKDERPGGPPRSGPPRGQFRRR) is disordered.

The protein belongs to the IF-1 family. In terms of assembly, component of the 30S ribosomal translation pre-initiation complex which assembles on the 30S ribosome in the order IF-2 and IF-3, IF-1 and N-formylmethionyl-tRNA(fMet); mRNA recruitment can occur at any time during PIC assembly.

Its subcellular location is the cytoplasm. One of the essential components for the initiation of protein synthesis. Stabilizes the binding of IF-2 and IF-3 on the 30S subunit to which N-formylmethionyl-tRNA(fMet) subsequently binds. Helps modulate mRNA selection, yielding the 30S pre-initiation complex (PIC). Upon addition of the 50S ribosomal subunit IF-1, IF-2 and IF-3 are released leaving the mature 70S translation initiation complex. This Rhodopseudomonas palustris (strain ATCC BAA-98 / CGA009) protein is Translation initiation factor IF-1.